The primary structure comprises 628 residues: Putative pentatricopeptide repeat-containing protein At3g13770, mitochondrial (628 aa).

A mitochondrion-targeting transit peptide spans 1-19 (MFNLMRLIHRSFSSSPTNY). PPR repeat units lie at residues 51 to 85 (GFHGYDALLNACLDKRALRDGQRVHAHMIKTRYLP), 86 to 116 (ATYLRTRLLIFYGKCDCLEDARKVLDEMPEK), 117 to 151 (NVVSWTAMISRYSQTGHSSEALTVFAEMMRSDGKP), 152 to 186 (NEFTFATVLTSCIRASGLGLGKQIHGLIVKWNYDS), 187 to 217 (HIFVGSSLLDMYAKAGQIKEAREIFECLPER), 218 to 252 (DVVSCTAIIAGYAQLGLDEEALEMFHRLHSEGMSP), 253 to 287 (NYVTYASLLTALSGLALLDHGKQAHCHVLRRELPF), 288 to 318 (YAVLQNSLIDMYSKCGNLSYARRLFDNMPER), 319 to 353 (TAISWNAMLVGYSKHGLGREVLELFRLMRDEKRVK), 355 to 389 (DAVTLLAVLSGCSHGRMEDTGLNIFDGMVAGEYGT), and 392 to 422 (GTEHYGCIVDMLGRAGRIDEAFEFIKRMPSK). The type E motif stretch occupies residues 427 to 502 (VLGSLLGACR…EPGRSWIQHE (76 aa)). Residues 503-533 (QTLHYFHANDRTHPRREEVLAKMKEISIKMK) are type E(+) motif. Residues 534–628 (QAGYVPDLSC…DGICSCGDYW (95 aa)) form a type DYW motif region.

Belongs to the PPR family. PCMP-H subfamily.

It is found in the mitochondrion. The protein is Putative pentatricopeptide repeat-containing protein At3g13770, mitochondrial (PCMP-H85) of Arabidopsis thaliana (Mouse-ear cress).